The sequence spans 640 residues: Threonine--tRNA ligase (640 aa).

In terms of domain architecture, TGS spans 1-61 (MLVVTLPDGS…DKDSQLAIIT (61 aa)). The tract at residues 242-533 (DHRRLGKQLD…LIENHTGNMP (292 aa)) is catalytic. Zn(2+) contacts are provided by Cys333, His384, and His510.

Belongs to the class-II aminoacyl-tRNA synthetase family. Homodimer. Requires Zn(2+) as cofactor.

The protein localises to the cytoplasm. The catalysed reaction is tRNA(Thr) + L-threonine + ATP = L-threonyl-tRNA(Thr) + AMP + diphosphate + H(+). In terms of biological role, catalyzes the attachment of threonine to tRNA(Thr) in a two-step reaction: L-threonine is first activated by ATP to form Thr-AMP and then transferred to the acceptor end of tRNA(Thr). Also edits incorrectly charged L-seryl-tRNA(Thr). This Polynucleobacter necessarius subsp. necessarius (strain STIR1) protein is Threonine--tRNA ligase.